A 1253-amino-acid chain; its full sequence is Methionine synthase (1253 aa).

The 321-residue stretch at 6–326 (QDEIEAILRK…DHIREIAEAV (321 aa)) folds into the Hcy-binding domain. Positions 248, 311, and 312 each coordinate Zn(2+). The 262-residue stretch at 359-620 (FVNIGERCNV…IHKDLLQLCE (262 aa)) folds into the Pterin-binding domain. (6S)-5,6,7,8-tetrahydrofolate contacts are provided by residues 370-372 (GSR), Asp437, Asn458, Asp525, Asn567, Arg573, and Arg579. The 98-residue stretch at 650-747 (QTDEWRNGSI…FMEKEREEAR (98 aa)) folds into the B12-binding N-terminal domain. Residues Glu697, 770 to 774 (GDVHD), His773, Ser818, Thr822, and Ala874 each bind methylcob(III)alamin. Residues 760–895 (QGTIVLATVK…DENLRDDYFE (136 aa)) form the B12-binding domain. In terms of domain architecture, AdoMet activation spans 911–1253 (SLKERKYVPL…LGPILGYDTD (343 aa)). Residues Asp962, Arg1160, and 1215–1216 (YF) contribute to the S-adenosyl-L-methionine site. The residue at position 1252 (Thr1252) is a Phosphothreonine.

This sequence belongs to the vitamin-B12 dependent methionine synthase family. Monomer. Dimer. Forms a multiprotein complex with MMACHC, MMADHC and MTRR. Methylcob(III)alamin serves as cofactor. Zn(2+) is required as a cofactor.

It is found in the cytoplasm. The catalysed reaction is (6S)-5-methyl-5,6,7,8-tetrahydrofolate + L-homocysteine = (6S)-5,6,7,8-tetrahydrofolate + L-methionine. The protein operates within amino-acid biosynthesis; L-methionine biosynthesis via de novo pathway; L-methionine from L-homocysteine (MetH route): step 1/1. Its function is as follows. Catalyzes the transfer of a methyl group from methylcob(III)alamin (MeCbl) to homocysteine, yielding enzyme-bound cob(I)alamin and methionine in the cytosol. MeCbl is an active form of cobalamin (vitamin B12) used as a cofactor for methionine biosynthesis. Cob(I)alamin form is regenerated to MeCbl by a transfer of a methyl group from 5-methyltetrahydrofolate. The processing of cobalamin in the cytosol occurs in a multiprotein complex composed of at least MMACHC, MMADHC, MTRR (methionine synthase reductase) and MTR which may contribute to shuttle safely and efficiently cobalamin towards MTR in order to produce methionine. The protein is Methionine synthase of Mus musculus (Mouse).